The sequence spans 458 residues: tRNA modification GTPase MnmE (458 aa).

(6S)-5-formyl-5,6,7,8-tetrahydrofolate is bound by residues R26, E88, and R127. Residues G224 to F378 enclose the TrmE-type G domain. Residue N234 coordinates K(+). GTP is bound by residues N234–S239, T253–T259, and D278–G281. Residue S238 coordinates Mg(2+). The K(+) site is built by T253, I255, and T258. Residue T259 coordinates Mg(2+). Residue K458 participates in (6S)-5-formyl-5,6,7,8-tetrahydrofolate binding.

Belongs to the TRAFAC class TrmE-Era-EngA-EngB-Septin-like GTPase superfamily. TrmE GTPase family. In terms of assembly, homodimer. Heterotetramer of two MnmE and two MnmG subunits. K(+) is required as a cofactor.

It localises to the cytoplasm. Exhibits a very high intrinsic GTPase hydrolysis rate. Involved in the addition of a carboxymethylaminomethyl (cmnm) group at the wobble position (U34) of certain tRNAs, forming tRNA-cmnm(5)s(2)U34. This chain is tRNA modification GTPase MnmE, found in Streptococcus pyogenes serotype M4 (strain MGAS10750).